The sequence spans 450 residues: UDP-N-acetylmuramoylalanine--D-glutamate ligase (450 aa).

119–125 (GSNGKTT) provides a ligand contact to ATP.

Belongs to the MurCDEF family.

The protein localises to the cytoplasm. The enzyme catalyses UDP-N-acetyl-alpha-D-muramoyl-L-alanine + D-glutamate + ATP = UDP-N-acetyl-alpha-D-muramoyl-L-alanyl-D-glutamate + ADP + phosphate + H(+). It participates in cell wall biogenesis; peptidoglycan biosynthesis. In terms of biological role, cell wall formation. Catalyzes the addition of glutamate to the nucleotide precursor UDP-N-acetylmuramoyl-L-alanine (UMA). The sequence is that of UDP-N-acetylmuramoylalanine--D-glutamate ligase from Streptococcus pneumoniae (strain JJA).